We begin with the raw amino-acid sequence, 179 residues long: Interleukin-22 (179 aa).

The N-terminal stretch at 1-33 is a signal peptide; sequence MAVLQKSMSFSLMGTLAASCLLLIALWAQEANA. 2 disulfides stabilise this stretch: C40–C132 and C89–C178. N-linked (GlcNAc...) asparagine glycosylation is found at N54, N68, and N97.

Belongs to the IL-10 family.

The protein resides in the secreted. Functionally, cytokine that plays a critical role in modulating tissue responses during inflammation. Plays an essential role in the regeneration of epithelial cells to maintain barrier function after injury and for the prevention of further tissue damage. Unlike most of the cytokines, has no effect on immune cells. Signals through a heterodimeric receptor composed of two subunits, the specific receptor IL22RA1 which is present on non-immune cells in many organs and the shared subunit IL10RB. Ligation of IL22RA1 with IL22 induces activation of the tyrosine kinases JAK1 and TYK2, which in turn activates STAT3. In turn, promotes cell survival and proliferation through STAT3, ERK1/2 and PI3K/AKT pathways. Promotes phosphorylation of GSK3B at 'Ser-9' and CTTN. Promotes epithelial cell spreading. This Mus musculus (Mouse) protein is Interleukin-22 (Il22).